The following is a 184-amino-acid chain: MGIEEKLPSGFLLTTVEGLAGYVRKGSLWPASFGLACCAIEMMATAGGRFDIARFGMEAFRASPRQADLMIVAGRVSQKMAPVLRQIYDQMVEPKWVLAMGVCASSGGMFNNYAIVQGVDHIVPVDIYLPGCPPRPEMLLNAILTLHEKIQQMPLGVHREEVARAAEQAALAATPTIQMKGLLR.

Positions 37, 38, 103, and 132 each coordinate [4Fe-4S] cluster.

The protein belongs to the complex I 20 kDa subunit family. NDH-1 is composed of 14 different subunits. Subunits NuoB, C, D, E, F, and G constitute the peripheral sector of the complex. Requires [4Fe-4S] cluster as cofactor.

Its subcellular location is the cell membrane. The catalysed reaction is a quinone + NADH + 5 H(+)(in) = a quinol + NAD(+) + 4 H(+)(out). Its function is as follows. NDH-1 shuttles electrons from NADH, via FMN and iron-sulfur (Fe-S) centers, to quinones in the respiratory chain. The immediate electron acceptor for the enzyme in this species is believed to be a menaquinone. Couples the redox reaction to proton translocation (for every two electrons transferred, four hydrogen ions are translocated across the cytoplasmic membrane), and thus conserves the redox energy in a proton gradient. The protein is NADH-quinone oxidoreductase subunit B of Rhodococcus jostii (strain RHA1).